We begin with the raw amino-acid sequence, 420 residues long: UDP-N-acetylglucosamine 1-carboxyvinyltransferase (420 aa).

Residue 22-23 (KN) participates in phosphoenolpyruvate binding. UDP-N-acetyl-alpha-D-glucosamine is bound at residue arginine 95. The active-site Proton donor is the cysteine 119. Cysteine 119 is subject to 2-(S-cysteinyl)pyruvic acid O-phosphothioketal. UDP-N-acetyl-alpha-D-glucosamine contacts are provided by residues 124 to 128 (RPIDQ), aspartate 307, and isoleucine 329.

The protein belongs to the EPSP synthase family. MurA subfamily.

Its subcellular location is the cytoplasm. It carries out the reaction phosphoenolpyruvate + UDP-N-acetyl-alpha-D-glucosamine = UDP-N-acetyl-3-O-(1-carboxyvinyl)-alpha-D-glucosamine + phosphate. It functions in the pathway cell wall biogenesis; peptidoglycan biosynthesis. Functionally, cell wall formation. Adds enolpyruvyl to UDP-N-acetylglucosamine. In Myxococcus xanthus (strain DK1622), this protein is UDP-N-acetylglucosamine 1-carboxyvinyltransferase.